A 94-amino-acid chain; its full sequence is Cytochrome b-c1 complex subunit 8, mitochondrial (94 aa).

At 2 to 49 (GPPSGKTYMGWWGHMGGPKQKGITSYAVSPYAQKPLQGIFHNAVFNSF) the chain is on the mitochondrial matrix side. The chain crosses the membrane as a helical span at residues 50–80 (RRFKSQFLYVLIPAGIYWYWWKNGNEYNEFL). The Mitochondrial intermembrane portion of the chain corresponds to 81 to 94 (YSKAGREELERVNV).

This sequence belongs to the UQCRQ/QCR8 family. In terms of assembly, component of the ubiquinol-cytochrome c oxidoreductase (cytochrome b-c1 complex, complex III, CIII), a multisubunit enzyme composed of 10 subunits. The complex is composed of 3 respiratory subunits cytochrome b (COB), cytochrome c1 (CYT1) and Rieske protein (RIP1), 2 core protein subunits COR1 and QCR2, and 5 low-molecular weight protein subunits QCR6, QCR7, QCR8, QCR9 and QCR10. The complex exists as an obligatory dimer and forms supercomplexes (SCs) in the inner mitochondrial membrane with a monomer or a dimer of cytochrome c oxidase (complex IV, CIV), resulting in 2 different assemblies (supercomplexes III(2)IV and III(2)IV(2)).

The protein resides in the mitochondrion inner membrane. Functionally, component of the ubiquinol-cytochrome c oxidoreductase, a multisubunit transmembrane complex that is part of the mitochondrial electron transport chain which drives oxidative phosphorylation. The respiratory chain contains 3 multisubunit complexes succinate dehydrogenase (complex II, CII), ubiquinol-cytochrome c oxidoreductase (cytochrome b-c1 complex, complex III, CIII) and cytochrome c oxidase (complex IV, CIV), that cooperate to transfer electrons derived from NADH and succinate to molecular oxygen, creating an electrochemical gradient over the inner membrane that drives transmembrane transport and the ATP synthase. The cytochrome b-c1 complex catalyzes electron transfer from ubiquinol to cytochrome c, linking this redox reaction to translocation of protons across the mitochondrial inner membrane, with protons being carried across the membrane as hydrogens on the quinol. In the process called Q cycle, 2 protons are consumed from the matrix, 4 protons are released into the intermembrane space and 2 electrons are passed to cytochrome c. The chain is Cytochrome b-c1 complex subunit 8, mitochondrial (QCR8) from Saccharomyces cerevisiae (strain ATCC 204508 / S288c) (Baker's yeast).